The following is a 231-amino-acid chain: Probable septum site-determining protein MinC (231 aa).

The segment at 102–125 is disordered; that stretch reads KEKAPRPAPAPQAPTQNTTPVTKT. Residues 114–123 are compositionally biased toward low complexity; that stretch reads APTQNTTPVT.

It belongs to the MinC family. As to quaternary structure, interacts with MinD and FtsZ.

Its function is as follows. Cell division inhibitor that blocks the formation of polar Z ring septums. Rapidly oscillates between the poles of the cell to destabilize FtsZ filaments that have formed before they mature into polar Z rings. Prevents FtsZ polymerization. The protein is Probable septum site-determining protein MinC of Escherichia coli O45:K1 (strain S88 / ExPEC).